Here is a 352-residue protein sequence, read N- to C-terminus: Chymopapain (352 aa).

Residues 1 to 18 form the signal peptide; the sequence is MATMSSISKIIFLATCLI. The propeptide at 19 to 134 is activation peptide; that stretch reads IHMGLSSADF…EDFTYKHVTN (116 aa). N-linked (GlcNAc...) asparagine glycosylation occurs at N86. Intrachain disulfides connect C156–C197, C190–C229, and C287–C338. C159 is a catalytic residue. Residues H293 and N313 contribute to the active site.

Belongs to the peptidase C1 family.

It carries out the reaction Specificity similar to that of papain.. Its function is as follows. Cysteine proteinase with a high level of diversity in substrate specificity. The chain is Chymopapain from Carica papaya (Papaya).